The chain runs to 137 residues: Ribosome-binding factor A (137 aa).

It belongs to the RbfA family. In terms of assembly, monomer. Binds 30S ribosomal subunits, but not 50S ribosomal subunits or 70S ribosomes.

It localises to the cytoplasm. In terms of biological role, one of several proteins that assist in the late maturation steps of the functional core of the 30S ribosomal subunit. Associates with free 30S ribosomal subunits (but not with 30S subunits that are part of 70S ribosomes or polysomes). Required for efficient processing of 16S rRNA. May interact with the 5'-terminal helix region of 16S rRNA. This chain is Ribosome-binding factor A, found in Nitrobacter hamburgensis (strain DSM 10229 / NCIMB 13809 / X14).